A 71-amino-acid chain; its full sequence is DNA-directed RNA polymerase subunit Rpo10 (71 aa).

Zn(2+) contacts are provided by Cys6, Cys9, Cys52, and Cys53.

Belongs to the archaeal Rpo10/eukaryotic RPB10 RNA polymerase subunit family. In terms of assembly, part of the RNA polymerase complex. Zn(2+) is required as a cofactor.

The protein resides in the cytoplasm. It catalyses the reaction RNA(n) + a ribonucleoside 5'-triphosphate = RNA(n+1) + diphosphate. DNA-dependent RNA polymerase (RNAP) catalyzes the transcription of DNA into RNA using the four ribonucleoside triphosphates as substrates. In Methanocella arvoryzae (strain DSM 22066 / NBRC 105507 / MRE50), this protein is DNA-directed RNA polymerase subunit Rpo10.